A 459-amino-acid chain; its full sequence is Cysteine--tRNA ligase (459 aa).

C28 provides a ligand contact to Zn(2+). Positions 30-40 (VTIYDLCHIGH) match the 'HIGH' region motif. Positions 209, 234, and 238 each coordinate Zn(2+). The 'KMSKS' region motif lies at 266-270 (KMSKS). An ATP-binding site is contributed by K269.

It belongs to the class-I aminoacyl-tRNA synthetase family. As to quaternary structure, monomer. The cofactor is Zn(2+).

Its subcellular location is the cytoplasm. The catalysed reaction is tRNA(Cys) + L-cysteine + ATP = L-cysteinyl-tRNA(Cys) + AMP + diphosphate. This chain is Cysteine--tRNA ligase, found in Shewanella piezotolerans (strain WP3 / JCM 13877).